We begin with the raw amino-acid sequence, 206 residues long: Large ribosomal subunit protein uL4 (206 aa).

Residues 51–76 form a disordered region; that stretch reads AKTRAEVSGGGIKPWRQKGTGRARQG.

Belongs to the universal ribosomal protein uL4 family. In terms of assembly, part of the 50S ribosomal subunit.

Functionally, one of the primary rRNA binding proteins, this protein initially binds near the 5'-end of the 23S rRNA. It is important during the early stages of 50S assembly. It makes multiple contacts with different domains of the 23S rRNA in the assembled 50S subunit and ribosome. In terms of biological role, forms part of the polypeptide exit tunnel. This Clostridium kluyveri (strain ATCC 8527 / DSM 555 / NBRC 12016 / NCIMB 10680 / K1) protein is Large ribosomal subunit protein uL4.